The sequence spans 119 residues: uncharacterized protein (119 aa).

The next 2 membrane-spanning stretches (helical) occupy residues 53–73 and 92–112; these read AATILMAWLLLTICFIPSFLA and FITHVYCLMIKPFVLYFWFLF.

It localises to the membrane. This is an uncharacterized protein from Saccharomyces cerevisiae (strain ATCC 204508 / S288c) (Baker's yeast).